Consider the following 574-residue polypeptide: Serine/threonine-protein kinase B (574 aa).

The Protein kinase domain maps to 34–301 (YQTLGLLGKG…VLDALEMPTY (268 aa)). Residues 40 to 48 (LGKGGFGAT) and K65 each bind ATP. D163 functions as the Proton acceptor in the catalytic mechanism. The tract at residues 319–407 (GAGDEPATGI…GGSVGAGGID (89 aa)) is disordered. Residues 343–364 (TRFNTNVQPRDPSSTSLNTGIK) are compositionally biased toward polar residues. Pentapeptide repeat domains are found at residues 454-493 (QNLV…DFGK) and 504-543 (ANLS…NFSG).

This sequence belongs to the protein kinase superfamily. Ser/Thr protein kinase family. Autophosphorylated.

It catalyses the reaction L-seryl-[protein] + ATP = O-phospho-L-seryl-[protein] + ADP + H(+). The enzyme catalyses L-threonyl-[protein] + ATP = O-phospho-L-threonyl-[protein] + ADP + H(+). Protein kinase required for cell motility, but not for phototaxis. This chain is Serine/threonine-protein kinase B (spkB), found in Synechocystis sp. (strain ATCC 27184 / PCC 6803 / Kazusa).